A 226-amino-acid polypeptide reads, in one-letter code: UPF0173 metal-dependent hydrolase Tpet_1587 (226 aa).

The protein belongs to the UPF0173 family.

The polypeptide is UPF0173 metal-dependent hydrolase Tpet_1587 (Thermotoga petrophila (strain ATCC BAA-488 / DSM 13995 / JCM 10881 / RKU-1)).